The chain runs to 192 residues: Fe/S biogenesis protein NfuA (192 aa).

C149 and C152 together coordinate [4Fe-4S] cluster.

This sequence belongs to the NfuA family. Homodimer. [4Fe-4S] cluster is required as a cofactor.

In terms of biological role, involved in iron-sulfur cluster biogenesis. Binds a 4Fe-4S cluster, can transfer this cluster to apoproteins, and thereby intervenes in the maturation of Fe/S proteins. Could also act as a scaffold/chaperone for damaged Fe/S proteins. This Shewanella frigidimarina (strain NCIMB 400) protein is Fe/S biogenesis protein NfuA.